Here is a 184-residue protein sequence, read N- to C-terminus: MQASQPEVWHGTTILTVRKGGKVVIGGDGQVSIGQTVIKSNAKKVRKLGKGDVIGGFAGATADAFTLFERLESKLEQYPGQLTRAAVELAKDWRTDRYLRRLEAMMLVADKDVSLVLTGTGDVLEPEAGVMAIGSGGNYALSAARALIDSDKDAETIVRRSLDIAADICVYTNRNLTIETLSTD.

Residue Thr-12 is part of the active site. Residues Ala-166, Cys-169, and Thr-172 each coordinate Na(+).

It belongs to the peptidase T1B family. HslV subfamily. As to quaternary structure, a double ring-shaped homohexamer of HslV is capped on each side by a ring-shaped HslU homohexamer. The assembly of the HslU/HslV complex is dependent on binding of ATP.

The protein resides in the cytoplasm. The enzyme catalyses ATP-dependent cleavage of peptide bonds with broad specificity.. Allosterically activated by HslU binding. Functionally, protease subunit of a proteasome-like degradation complex believed to be a general protein degrading machinery. The protein is ATP-dependent protease subunit HslV of Nitrobacter hamburgensis (strain DSM 10229 / NCIMB 13809 / X14).